Consider the following 102-residue polypeptide: Large ribosomal subunit protein bL21 (102 aa).

It belongs to the bacterial ribosomal protein bL21 family. In terms of assembly, part of the 50S ribosomal subunit. Contacts protein L20.

Functionally, this protein binds to 23S rRNA in the presence of protein L20. The sequence is that of Large ribosomal subunit protein bL21 from Lachnospira eligens (strain ATCC 27750 / DSM 3376 / VPI C15-48 / C15-B4) (Eubacterium eligens).